We begin with the raw amino-acid sequence, 260 residues long: Arginine esterase (260 aa).

The first 17 residues, 1–17 (MWFLALCLAMSLGWTGA), serve as a signal peptide directing secretion. Residues 18–24 (EPHFQPR) constitute a propeptide, activation peptide. Residues 25–257 (IIGGRECLKN…HLMWIKDTMK (233 aa)) form the Peptidase S1 domain. Cystine bridges form between C31–C172, C50–C66, C151–C218, C183–C197, and C208–C233. The active-site Charge relay system is H65. Residue N79 is glycosylated (N-linked (GlcNAc...) asparagine). D119 functions as the Charge relay system in the catalytic mechanism. S212 (charge relay system) is an active-site residue.

The protein belongs to the peptidase S1 family. Kallikrein subfamily.

It carries out the reaction Preferential cleavage of Arg-|-Xaa bonds in small molecule substrates. Highly selective action to release kallidin (lysyl-bradykinin) from kininogen involves hydrolysis of Met-|-Xaa or Leu-|-Xaa.. In terms of biological role, this serine protease is found in dog seminal plasma, its exact physiological function is not known. This chain is Arginine esterase, found in Canis lupus familiaris (Dog).